The sequence spans 71 residues: High-potential iron-sulfur protein isozyme 2 (71 aa).

Residues C34, C37, C51, and C65 each coordinate [4Fe-4S] cluster.

This sequence belongs to the high-potential iron-sulfur protein (HiPIP) family. Homodimer.

Functionally, specific class of high-redox-potential 4Fe-4S ferredoxins. Functions in anaerobic electron transport in most purple and in some other photosynthetic bacteria and in at least one genus (Paracoccus) of halophilic, denitrifying bacteria. The protein is High-potential iron-sulfur protein isozyme 2 (hip2) of Ectothiorhodospira shaposhnikovii (Ectothiorhodospira vacuolata).